Reading from the N-terminus, the 394-residue chain is MTNIIRQFLRQEAAGGLILIIAAAIALLMANSALQGVYQSFLDIPVSIKIASLDISKPLLLWINDGLMAVFFLMVGLEVKRELMEGSLAGRDKAVFPAIAALGGMLAPALIYLLFNGADEVTRQGWAIPAATDIAFALGVMALLGNRVPTGLKVFLLALAIIDDLGVIIIIALFYTQQVSLQSLGIAAAAIALLAYMNWRGVGKTSAYLLVGLVLWVCILKSGVHATLAGVIVGFMIPLHTQDQRSPSESLEHGLHPWVAYLILPLFAFANAGVSLQGVSLSGLTSLLPMGIATGLFIGKPLGIFTFSWLAVKLGIAKLPDAINFKQIFAVSVLCGIGFTMSIFIASLAFEGTDIALTTYSKLGILLGSTTAAVVGYSLLRLVLPARRKAVNVR.

11 helical membrane-spanning segments follow: residues 14–34, 59–79, 95–115, 125–145, 154–174, 179–199, 213–233, 254–274, 292–312, 328–348, and 363–383; these read AGGLILIIAAAIALLMANSAL, LLLWINDGLMAVFFLMVGLEV, VFPAIAALGGMLAPALIYLLF, GWAIPAATDIAFALGVMALLG, VFLLALAIIDDLGVIIIIALF, VSLQSLGIAAAAIALLAYMNW, LVLWVCILKSGVHATLAGVIV, GLHPWVAYLILPLFAFANAGV, IATGLFIGKPLGIFTFSWLAV, IFAVSVLCGIGFTMSIFIASL, and LGILLGSTTAAVVGYSLLRLV.

The protein belongs to the NhaA Na(+)/H(+) (TC 2.A.33) antiporter family.

It localises to the cell inner membrane. It carries out the reaction Na(+)(in) + 2 H(+)(out) = Na(+)(out) + 2 H(+)(in). Functionally, na(+)/H(+) antiporter that extrudes sodium in exchange for external protons. This Yersinia pseudotuberculosis serotype IB (strain PB1/+) protein is Na(+)/H(+) antiporter NhaA.